The following is a 245-amino-acid chain: MQSPEKITPYDTECPKNEQVEAMFNHIAGHYDRLNHLFSWGMDRVWRQKAIRMIEPFAPHTVLDVATGTGDLAIEICRHIPSVKQVTGVDLSLEMMRIGEQKVRSENLDNRITFMQKDCLDLPFADHSFDAVTVAFGLRNFQNIKLGLEEMYRVLNEGAPLMILELSRPVSFPWKQGYNFYASHVIPVVGRFLSQDAEAYTYLPESIAAMPQREELADLMLSVGFREAYYRSLSLEVATVYMGLK.

S-adenosyl-L-methionine is bound by residues T69, D90, and 118 to 119; that span reads DC.

Belongs to the class I-like SAM-binding methyltransferase superfamily. MenG/UbiE family.

The enzyme catalyses a 2-demethylmenaquinol + S-adenosyl-L-methionine = a menaquinol + S-adenosyl-L-homocysteine + H(+). It participates in quinol/quinone metabolism; menaquinone biosynthesis; menaquinol from 1,4-dihydroxy-2-naphthoate: step 2/2. Methyltransferase required for the conversion of demethylmenaquinol (DMKH2) to menaquinol (MKH2). This chain is Demethylmenaquinone methyltransferase, found in Porphyromonas gingivalis (strain ATCC 33277 / DSM 20709 / CIP 103683 / JCM 12257 / NCTC 11834 / 2561).